A 62-amino-acid chain; its full sequence is Protein DsrB (62 aa).

It belongs to the DsrB family.

The chain is Protein DsrB from Enterobacter sp. (strain 638).